The following is a 414-amino-acid chain: L-cysteine:1D-myo-inositol 2-amino-2-deoxy-alpha-D-glucopyranoside ligase (414 aa).

Positions 1–38 (MRSWPAPEVPNLPEAGLPGPALPLHLHDTATGTVRPTR) are disordered. Over residues 11-38 (NLPEAGLPGPALPLHLHDTATGTVRPTR) the composition is skewed to low complexity. Cysteine 48 serves as a coordination point for Zn(2+). L-cysteinyl-5'-AMP contacts are provided by residues 48-51 (CGIT), threonine 63, and 86-88 (NVT). The 'HIGH' region motif lies at 50–60 (ITPYDATHLGH). The 'ERGGDP' region signature appears at 188 to 193 (ERGGDP). Tryptophan 228 serves as a coordination point for L-cysteinyl-5'-AMP. Cysteine 232 lines the Zn(2+) pocket. L-cysteinyl-5'-AMP is bound at residue 250-252 (GSD). Histidine 257 contributes to the Zn(2+) binding site. Valine 284 is a binding site for L-cysteinyl-5'-AMP. A 'KMSKS' region motif is present at residues 290 to 294 (KMSKS).

It belongs to the class-I aminoacyl-tRNA synthetase family. MshC subfamily. As to quaternary structure, monomer. The cofactor is Zn(2+).

The enzyme catalyses 1D-myo-inositol 2-amino-2-deoxy-alpha-D-glucopyranoside + L-cysteine + ATP = 1D-myo-inositol 2-(L-cysteinylamino)-2-deoxy-alpha-D-glucopyranoside + AMP + diphosphate + H(+). In terms of biological role, catalyzes the ATP-dependent condensation of GlcN-Ins and L-cysteine to form L-Cys-GlcN-Ins. The sequence is that of L-cysteine:1D-myo-inositol 2-amino-2-deoxy-alpha-D-glucopyranoside ligase from Thermomonospora curvata (strain ATCC 19995 / DSM 43183 / JCM 3096 / KCTC 9072 / NBRC 15933 / NCIMB 10081 / Henssen B9).